The sequence spans 502 residues: Glycerol kinase (502 aa).

ADP is bound at residue threonine 14. 3 residues coordinate ATP: threonine 14, threonine 15, and serine 16. Threonine 14 is a binding site for sn-glycerol 3-phosphate. ADP is bound at residue arginine 18. 4 residues coordinate sn-glycerol 3-phosphate: arginine 84, glutamate 85, tyrosine 136, and aspartate 246. The glycerol site is built by arginine 84, glutamate 85, tyrosine 136, aspartate 246, and glutamine 247. ADP is bound by residues threonine 268 and glycine 311. Positions 268, 311, 315, and 412 each coordinate ATP. Residues glycine 412 and asparagine 416 each contribute to the ADP site.

It belongs to the FGGY kinase family. Homotetramer and homodimer (in equilibrium). Heterodimer with EIIA-Glc. Binds 1 zinc ion per glycerol kinase EIIA-Glc dimer. The zinc ion is important for dimerization.

The catalysed reaction is glycerol + ATP = sn-glycerol 3-phosphate + ADP + H(+). It functions in the pathway polyol metabolism; glycerol degradation via glycerol kinase pathway; sn-glycerol 3-phosphate from glycerol: step 1/1. With respect to regulation, activity of this regulatory enzyme is affected by several metabolites. Allosterically and non-competitively inhibited by fructose 1,6-bisphosphate (FBP) and unphosphorylated phosphocarrier protein EIIA-Glc (III-Glc), an integral component of the bacterial phosphotransferase (PTS) system. Key enzyme in the regulation of glycerol uptake and metabolism. Catalyzes the phosphorylation of glycerol to yield sn-glycerol 3-phosphate. This chain is Glycerol kinase, found in Citrobacter koseri (strain ATCC BAA-895 / CDC 4225-83 / SGSC4696).